The chain runs to 334 residues: Anthranilate phosphoribosyltransferase (334 aa).

Residues Gly79, 82–83 (GD), Ser87, 89–92 (NIST), 107–115 (KHGNRSISS), and Ser119 contribute to the 5-phospho-alpha-D-ribose 1-diphosphate site. Residue Gly79 participates in anthranilate binding. Mg(2+) is bound at residue Ser91. Asn110 is a binding site for anthranilate. Arg165 lines the anthranilate pocket. Mg(2+) contacts are provided by Asp224 and Glu225.

It belongs to the anthranilate phosphoribosyltransferase family. Homodimer. It depends on Mg(2+) as a cofactor.

The enzyme catalyses N-(5-phospho-beta-D-ribosyl)anthranilate + diphosphate = 5-phospho-alpha-D-ribose 1-diphosphate + anthranilate. It participates in amino-acid biosynthesis; L-tryptophan biosynthesis; L-tryptophan from chorismate: step 2/5. Functionally, catalyzes the transfer of the phosphoribosyl group of 5-phosphorylribose-1-pyrophosphate (PRPP) to anthranilate to yield N-(5'-phosphoribosyl)-anthranilate (PRA). This chain is Anthranilate phosphoribosyltransferase, found in Streptococcus pneumoniae (strain 70585).